The primary structure comprises 868 residues: DNA topoisomerase 1 (868 aa).

In terms of domain architecture, Toprim spans K3–I147. E9 contacts Mg(2+). The segment at I34–R70 is disordered. D116 is a binding site for Mg(2+). The region spanning D163–L580 is the Topo IA-type catalytic domain. An interaction with DNA region spans residues S197–Q202. Y324 serves as the catalytic O-(5'-phospho-DNA)-tyrosine intermediate. C4-type zinc fingers lie at residues C602–C633, C664–C691, and C713–C738.

This sequence belongs to the type IA topoisomerase family. In terms of assembly, monomer. Requires Mg(2+) as cofactor.

It catalyses the reaction ATP-independent breakage of single-stranded DNA, followed by passage and rejoining.. Its function is as follows. Releases the supercoiling and torsional tension of DNA, which is introduced during the DNA replication and transcription, by transiently cleaving and rejoining one strand of the DNA duplex. Introduces a single-strand break via transesterification at a target site in duplex DNA. The scissile phosphodiester is attacked by the catalytic tyrosine of the enzyme, resulting in the formation of a DNA-(5'-phosphotyrosyl)-enzyme intermediate and the expulsion of a 3'-OH DNA strand. The free DNA strand then undergoes passage around the unbroken strand, thus removing DNA supercoils. Finally, in the religation step, the DNA 3'-OH attacks the covalent intermediate to expel the active-site tyrosine and restore the DNA phosphodiester backbone. In Pseudomonas aeruginosa (strain ATCC 15692 / DSM 22644 / CIP 104116 / JCM 14847 / LMG 12228 / 1C / PRS 101 / PAO1), this protein is DNA topoisomerase 1.